Consider the following 662-residue polypeptide: DNA ligase (662 aa).

NAD(+)-binding positions include 31–35 (DSEYD), 79–80 (SL), and Glu-119. Lys-121 serves as the catalytic N6-AMP-lysine intermediate. The NAD(+) site is built by Arg-142, Glu-176, Lys-288, and Lys-312. Residues Cys-405, Cys-408, Cys-421, and Cys-427 each contribute to the Zn(2+) site. A BRCT domain is found at 583-662 (NIEKKLDNLT…DELNSFLDNL (80 aa)).

It belongs to the NAD-dependent DNA ligase family. LigA subfamily. It depends on Mg(2+) as a cofactor. Requires Mn(2+) as cofactor.

It carries out the reaction NAD(+) + (deoxyribonucleotide)n-3'-hydroxyl + 5'-phospho-(deoxyribonucleotide)m = (deoxyribonucleotide)n+m + AMP + beta-nicotinamide D-nucleotide.. Functionally, DNA ligase that catalyzes the formation of phosphodiester linkages between 5'-phosphoryl and 3'-hydroxyl groups in double-stranded DNA using NAD as a coenzyme and as the energy source for the reaction. It is essential for DNA replication and repair of damaged DNA. The chain is DNA ligase from Finegoldia magna (strain ATCC 29328 / DSM 20472 / WAL 2508) (Peptostreptococcus magnus).